The following is a 408-amino-acid chain: UPF0754 membrane protein Tery_3973 (408 aa).

A run of 2 helical transmembrane segments spans residues Ile-4–Ile-24 and Ile-385–Val-405.

This sequence belongs to the UPF0754 family.

The protein resides in the cell inner membrane. This Trichodesmium erythraeum (strain IMS101) protein is UPF0754 membrane protein Tery_3973.